The sequence spans 151 residues: Probable transport accessory protein MmpS1 (151 aa).

The next 2 helical transmembrane spans lie at 8–28 (FWIPMVIVIVVAVAAVTVSRL) and 81–101 (VVNAAVPWSFTIVTTLTAVVA).

The protein belongs to the MmpS family.

Its subcellular location is the cell membrane. This Mycobacterium tuberculosis (strain CDC 1551 / Oshkosh) protein is Probable transport accessory protein MmpS1 (mmpS1).